The primary structure comprises 488 residues: Endoglucanase A (488 aa).

Substrate is bound by residues H59, 63 to 64 (WY), Y90, and H125. E163 acts as the Proton donor in catalysis. Y226 contributes to the substrate binding site. E252 (nucleophile) is an active-site residue. Residues 258 to 259 (AT), W286, and 291 to 293 (KDE) each bind substrate. Disordered regions lie at residues 326-362 (ESAS…AWDP) and 388-451 (EPGA…WDPT). Composition is skewed to pro residues over residues 332-353 (PSDP…PPSD) and 405-416 (PSEPSDPPPPSE). Positions 417–433 (PEPDPGEPDPGEPDPGE) are enriched in acidic residues.

Belongs to the glycosyl hydrolase 5 (cellulase A) family.

The enzyme catalyses Endohydrolysis of (1-&gt;4)-beta-D-glucosidic linkages in cellulose, lichenin and cereal beta-D-glucans.. This is Endoglucanase A (celA) from Evansella cellulosilytica (strain ATCC 21833 / DSM 2522 / FERM P-1141 / JCM 9156 / N-4) (Bacillus cellulosilyticus).